The chain runs to 326 residues: Endo-beta-1,4-glucanase A (326 aa).

The N-terminal stretch at 1–19 (MRSLVLLSSVLALVAPSKG) is a signal peptide. Glu150 acts as the Proton donor in catalysis. The active-site Nucleophile is Glu257.

It belongs to the glycosyl hydrolase 5 (cellulase A) family.

It localises to the secreted. It catalyses the reaction Endohydrolysis of (1-&gt;4)-beta-D-glucosidic linkages in cellulose, lichenin and cereal beta-D-glucans.. Functionally, has endoglucanase activity on substrates containing beta-1,4 glycosidic bonds, like in carboxymethylcellulose (CMC), hydroxyethylcellulose (HEC) and beta-glucan. Involved in the degradation of complex natural cellulosic substrates. This is Endo-beta-1,4-glucanase A (eglA) from Emericella nidulans (strain FGSC A4 / ATCC 38163 / CBS 112.46 / NRRL 194 / M139) (Aspergillus nidulans).